We begin with the raw amino-acid sequence, 117 residues long: Large ribosomal subunit protein bL19 (117 aa).

It belongs to the bacterial ribosomal protein bL19 family.

Functionally, this protein is located at the 30S-50S ribosomal subunit interface and may play a role in the structure and function of the aminoacyl-tRNA binding site. The sequence is that of Large ribosomal subunit protein bL19 from Shewanella frigidimarina (strain NCIMB 400).